Consider the following 411-residue polypeptide: MTHLSKMPTGYTPPAEWKYPIDLSIDYRKPENRMYLLKAWVEALSYTEEHNQQVRLMDYAIEVTEGITQLEKIERKIWMAFLWGCCYNGIGPWTIYSEFPVPPQSPQEFKRFCDWYNLNFERMRFDTDCRYRKSKMIPCVQSYIDWLAGRTQMDAFRPLLETKLQSDQFVKLWDTAMGWKYFGRLSAWNFLEALNMVFGNMYQIDVPGFMLRDRDGSESNRNGAAFLSNRDDWVTKHGKKKINGCPITDEECDILEADLEQAFKDCVAEFGHITFINRLNFETSGACWLKKFFRLKNTRYIGWDAERTWDEIDYMERIWPEYSCKALWEARSLWLPDTLLCEKAPAGHVPGVQKWKMPVFFETGVPLHIWHLQQGTRWEPSEVYTNLKMPVRKIDDNPKSTSVNLMSLLKR.

The active site involves Glu282.

Belongs to the thymidine aminotransferase family.

The enzyme catalyses 5-phosphomethyl-dUMP in DNA + L-serine = 5-O-(L-seryl)-dTMP in DNA + phosphate. Functionally, transfers serine to 5-phosphomethyl-2'-deoxyuridine (5-PmdU) to produce 5-O-serinylthymidine (O-SerT) as a step in the pathway leading to thymidine hypermodifications in the viral genome. As a final result of the pathway of hypermodification, 5-aminoethoxy-2'-deoxymethyluridine (5-NeOmdU) substitutes for about 40% of the thymidines in the viral DNA. These modifications probably prevent degradation of viral genome by the host restriction-modification antiviral defense system. The sequence is that of Serinyltransferase from Salmonella typhi.